Reading from the N-terminus, the 487-residue chain is Citrate/succinate antiporter (487 aa).

14 helical membrane passes run 11–31 (LLAP…DGMP), 60–80 (FIAV…AKEL), 95–115 (GLAG…IFAL), 138–158 (TLTL…FTPS), 190–210 (IGGY…SMFV), 214–234 (APNV…ISWL), 237–257 (FLCF…LSYV), 288–308 (WTLI…SEVI), 309–329 (NATA…VVPW), 345–365 (LATL…DWFA), 379–399 (ATVI…ASLS), 401–421 (HTAT…GVPM), 424–444 (LCIL…YATG), and 463–483 (LGAI…WPIL).

Belongs to the SLC13A/DASS transporter (TC 2.A.47) family. DIT1 subfamily.

Its subcellular location is the cell inner membrane. Its function is as follows. Responsible for the uptake of citrate in exchange to the efflux of succinate. Has a relatively broad specificity for C(4)-dicarboxylates and tricarboxylates. This is Citrate/succinate antiporter (citT) from Escherichia coli O157:H7.